Reading from the N-terminus, the 526-residue chain is ATP synthase subunit alpha (526 aa).

Position 171-178 (171-178 (GDRQTGKT)) interacts with ATP.

The protein belongs to the ATPase alpha/beta chains family. F-type ATPases have 2 components, CF(1) - the catalytic core - and CF(0) - the membrane proton channel. CF(1) has five subunits: alpha(3), beta(3), gamma(1), delta(1), epsilon(1). CF(0) has three main subunits: a(1), b(2) and c(9-12). The alpha and beta chains form an alternating ring which encloses part of the gamma chain. CF(1) is attached to CF(0) by a central stalk formed by the gamma and epsilon chains, while a peripheral stalk is formed by the delta and b chains.

The protein localises to the cell membrane. It carries out the reaction ATP + H2O + 4 H(+)(in) = ADP + phosphate + 5 H(+)(out). Produces ATP from ADP in the presence of a proton gradient across the membrane. The alpha chain is a regulatory subunit. This Christiangramia forsetii (strain DSM 17595 / CGMCC 1.15422 / KT0803) (Gramella forsetii) protein is ATP synthase subunit alpha.